We begin with the raw amino-acid sequence, 491 residues long: MSRQEQTPLFSGVVAHAKHNPVQFHIPGHKKGAGMDPAFRSFIGDNALSIDLINIGPLDDLHHPHGIIKEAQELAAEAFGADHTFFSVQGTSGAIMTMIMSVVGPGEKIIVPRNVHKSIMSAIVFSGATPVFIHPEIDPLLGISHGITIEAVEKALDAHPDAKGLLVINPTYFGIAANLKKIVELCHSRDVPVLVDEAHGVHIHFHEALPLSAMQAGADMAATSVHKLGGSLTQSSILNVREGLVSAKRVQTIISMLTTTSTSYLLLASLDAARKHLATNGRDLIGYTIQLADQARDQINAIDGLYCVGKEILGTIATYDYDPTKLIISVKNLGITGYDAEVWLREHYQIEVELSDLYNILCIVSFGDTEREMDLLVKALSELADLHKHGICERSPVSVYVPNIPTLAMSPRDAFYAETEVVPFEDSVGRTIAEFIMVYPPGIPILIPGEIITESNLAYIRENNRAGLPVQGPEDDTFRTLRVIKEHEAIR.

K227 carries the post-translational modification N6-(pyridoxal phosphate)lysine.

The protein belongs to the Orn/Lys/Arg decarboxylase class-I family. Requires pyridoxal 5'-phosphate as cofactor.

The protein resides in the cytoplasm. It catalyses the reaction L-arginine + H(+) = agmatine + CO2. It participates in amine and polyamine biosynthesis; agmatine biosynthesis; agmatine from L-arginine: step 1/1. Its function is as follows. Catalyzes the formation of agmatine from arginine. The polypeptide is Arginine decarboxylase (speA) (Halalkalibacterium halodurans (strain ATCC BAA-125 / DSM 18197 / FERM 7344 / JCM 9153 / C-125) (Bacillus halodurans)).